Consider the following 241-residue polypeptide: Probable phosphatase Cthe_0111 (241 aa).

Residues His-8, His-10, His-16, His-41, Glu-74, His-102, His-132, Asp-192, and His-194 each coordinate Zn(2+).

The protein belongs to the PHP family. The cofactor is Zn(2+).

This chain is Probable phosphatase Cthe_0111, found in Acetivibrio thermocellus (strain ATCC 27405 / DSM 1237 / JCM 9322 / NBRC 103400 / NCIMB 10682 / NRRL B-4536 / VPI 7372) (Clostridium thermocellum).